A 276-amino-acid chain; its full sequence is Anamorsin homolog (276 aa).

Positions 1–152 (MEPYVVDNLN…TRGSSIKLPW (152 aa)) are N-terminal SAM-like domain. Positions 152 to 189 (WAHSDIEAAWENVDNETSYDVDKNLINTNSLLQKSDYV) are linker. [2Fe-2S] cluster contacts are provided by cysteine 195, cysteine 211, cysteine 214, and cysteine 216. The fe-S binding site A stretch occupies residues 195–216 (CGQEFAKNSIGKRKRACKNCTC). Residues cysteine 237, cysteine 240, cysteine 248, and cysteine 251 each contribute to the [4Fe-4S] cluster site. Short sequence motifs (cx2C motif) lie at residues 237 to 240 (CGNC) and 248 to 251 (CSTC). The segment at 237-251 (CGNCYLGDAFRCSTC) is fe-S binding site B.

The protein belongs to the anamorsin family. As to quaternary structure, monomer. [2Fe-2S] cluster serves as cofactor. The cofactor is [4Fe-4S] cluster.

Its subcellular location is the cytoplasm. The protein resides in the mitochondrion intermembrane space. In terms of biological role, component of the cytosolic iron-sulfur (Fe-S) protein assembly (CIA) machinery. Required for the maturation of extramitochondrial Fe-S proteins. Part of an electron transfer chain functioning in an early step of cytosolic Fe-S biogenesis, facilitating the de novo assembly of a [4Fe-4S] cluster on the cytosolic Fe-S scaffold complex. Electrons are transferred from NADPH via a FAD- and FMN-containing diflavin oxidoreductase. Together with the diflavin oxidoreductase, also required for the assembly of the diferric tyrosyl radical cofactor of ribonucleotide reductase (RNR), probably by providing electrons for reduction during radical cofactor maturation in the catalytic small subunit. This is Anamorsin homolog from Schistosoma japonicum (Blood fluke).